Here is a 361-residue protein sequence, read N- to C-terminus: Probable galacturonosyltransferase-like 5 (361 aa).

The Cytoplasmic segment spans residues 1-6; it reads MHWITR. Residues 7 to 27 traverse the membrane as a helical; Signal-anchor for type II membrane protein segment; it reads FSAFFSAALAMILLSPSLQSF. Residues 28–361 are Lumenal-facing; it reads SPAAAIRSSH…APYDLYKHSH (334 aa). Asn-218 and Asn-234 each carry an N-linked (GlcNAc...) asparagine glycan.

This sequence belongs to the glycosyltransferase 8 family.

The protein localises to the golgi apparatus membrane. It functions in the pathway glycan metabolism; pectin biosynthesis. May be involved in pectin and/or xylans biosynthesis in cell walls. This Arabidopsis thaliana (Mouse-ear cress) protein is Probable galacturonosyltransferase-like 5 (GATL5).